A 192-amino-acid polypeptide reads, in one-letter code: Thymidylate kinase (192 aa).

7–14 (GIDCVGKS) lines the ATP pocket.

This sequence belongs to the thymidylate kinase family.

The enzyme catalyses dTMP + ATP = dTDP + ADP. Functionally, phosphorylation of dTMP to form dTDP in both de novo and salvage pathways of dTTP synthesis. The polypeptide is Thymidylate kinase (Campylobacter jejuni subsp. jejuni serotype O:23/36 (strain 81-176)).